Here is a 125-residue protein sequence, read N- to C-terminus: Large ribosomal subunit protein bL12 (125 aa).

Belongs to the bacterial ribosomal protein bL12 family. Homodimer. Part of the ribosomal stalk of the 50S ribosomal subunit. Forms a multimeric L10(L12)X complex, where L10 forms an elongated spine to which 2 to 4 L12 dimers bind in a sequential fashion. Binds GTP-bound translation factors.

Forms part of the ribosomal stalk which helps the ribosome interact with GTP-bound translation factors. Is thus essential for accurate translation. In Granulibacter bethesdensis (strain ATCC BAA-1260 / CGDNIH1), this protein is Large ribosomal subunit protein bL12.